The primary structure comprises 305 residues: 2-oxoacid:ferredoxin oxidoreductase subunit beta (305 aa).

Residues C12, C15, and C46 each coordinate [4Fe-4S] cluster. Residues 44 to 47 (IGCS) and H65 contribute to the thiamine diphosphate site. D90 contacts Mg(2+). 91 to 92 (GD) contributes to the thiamine diphosphate binding site. Residues N118 and V120 each coordinate Mg(2+). 122 to 123 (GL) lines the thiamine diphosphate pocket. A [4Fe-4S] cluster-binding site is contributed by C197.

As to quaternary structure, heterodimer composed of an alpha and a beta subunit. Requires [4Fe-4S] cluster as cofactor. Thiamine diphosphate serves as cofactor. Mg(2+) is required as a cofactor.

The enzyme catalyses a 2-oxocarboxylate + 2 oxidized [2Fe-2S]-[ferredoxin] + CoA = an acyl-CoA + 2 reduced [2Fe-2S]-[ferredoxin] + CO2 + H(+). Its function is as follows. Catalyzes the coenzyme A-dependent oxidative decarboxylation of different 2-oxoacids such as 2-oxoglutarate, pyruvate and 2-oxobutyrate to form their CoA derivatives. The chain is 2-oxoacid:ferredoxin oxidoreductase subunit beta from Saccharolobus solfataricus (Sulfolobus solfataricus).